The primary structure comprises 353 residues: UDP-N-acetylenolpyruvoylglucosamine reductase (353 aa).

An FAD-binding PCMH-type domain is found at leucine 31–proline 201. Arginine 177 is an active-site residue. Serine 250 acts as the Proton donor in catalysis. Residue glutamate 346 is part of the active site.

This sequence belongs to the MurB family. It depends on FAD as a cofactor.

The protein resides in the cytoplasm. The enzyme catalyses UDP-N-acetyl-alpha-D-muramate + NADP(+) = UDP-N-acetyl-3-O-(1-carboxyvinyl)-alpha-D-glucosamine + NADPH + H(+). It functions in the pathway cell wall biogenesis; peptidoglycan biosynthesis. In terms of biological role, cell wall formation. This is UDP-N-acetylenolpyruvoylglucosamine reductase from Bordetella parapertussis (strain 12822 / ATCC BAA-587 / NCTC 13253).